Here is a 200-residue protein sequence, read N- to C-terminus: Cytochrome c biogenesis ATP-binding export protein CcmA (200 aa).

Residues 3–199 (LSGRRVICVR…DSRELRIGGV (197 aa)) enclose the ABC transporter domain. 35–42 (GRNGSGKT) serves as a coordination point for ATP.

This sequence belongs to the ABC transporter superfamily. CcmA exporter (TC 3.A.1.107) family. The complex is composed of two ATP-binding proteins (CcmA) and two transmembrane proteins (CcmB).

The protein localises to the cell inner membrane. It carries out the reaction heme b(in) + ATP + H2O = heme b(out) + ADP + phosphate + H(+). Part of the ABC transporter complex CcmAB involved in the biogenesis of c-type cytochromes; once thought to export heme, this seems not to be the case, but its exact role is uncertain. Responsible for energy coupling to the transport system. The chain is Cytochrome c biogenesis ATP-binding export protein CcmA from Bradyrhizobium diazoefficiens (strain JCM 10833 / BCRC 13528 / IAM 13628 / NBRC 14792 / USDA 110).